The chain runs to 236 residues: Small ribosomal subunit protein uS2c (236 aa).

The protein belongs to the universal ribosomal protein uS2 family.

It is found in the plastid. The protein localises to the chloroplast. This Aethionema grandiflorum (Persian stone-cress) protein is Small ribosomal subunit protein uS2c (rps2).